The chain runs to 142 residues: Hemoglobin subunit pi (142 aa).

One can recognise a Globin domain in the interval threonine 2–arginine 142. Heme b contacts are provided by histidine 59 and histidine 88.

The protein belongs to the globin family.

Functionally, the pi' chain is the counterpart of the alpha chain in the major early embryonic hemoglobin P. This is Hemoglobin subunit pi from Cairina moschata (Muscovy duck).